The primary structure comprises 398 residues: MEMNKVLHQDLVQATRRILKLGPSELRVTDAGLICKNPNYSVCDAMLKTDTVYCVEYLLSYWESRTDHVPCFIFKNTGCAVSLCCFVRAPVKLVSPARHVGEFNVLKVNESLIVTLKDIEEIKPSAYGVLTKCVVRKSNSASVFNIELIAFGPENEGEYENLLRELYAKKAASTSLAVRNHVTVSSHSGSGPSLWRARMSAALTRTAGKRSPRTASPPPPPPRHPSCSPTMVAAGGAAAGPRPPPPPMAAGSWRLCRCEACMGRCGCASEGDADEEEEELLALAGEGKAAAAAAGQDIGGSARRPLEEHVSRRRGVSTHHRHPPSPPCTPSLERTGYRWAPSSWWRARSGPSRPQSGPWLPARFATLGPLVLALLLVLALLWRGHGQSSSPTRSAHRD.

Residues 1 to 359 (MEMNKVLHQD…GPSRPQSGPW (359 aa)) are Perinuclear space-facing. 2 disordered regions span residues 202-246 (ALTR…PPPP) and 306-334 (LEEHVSRRRGVSTHHRHPPSPPCTPSLER). Residues 215–224 (ASPPPPPPRH) are compositionally biased toward pro residues. S216 carries the post-translational modification Phosphoserine. Residues 225-240 (PSCSPTMVAAGGAAAG) are compositionally biased toward low complexity. The segment covering 311-323 (SRRRGVSTHHRHP) has biased composition (basic residues). A helical transmembrane segment spans residues 360-382 (LPARFATLGPLVLALLLVLALLW). Over 383 to 398 (RGHGQSSSPTRSAHRD) the chain is Nuclear.

Belongs to the herpesviridae NEC2 protein family. Forms a heterohexameric complex with NEC1. Interacts with host UBA7 and RNF170; this interaction promotes UBA7 proteasomal degradation. In terms of processing, phosphorylated. Phosphorylation by viral kinase UL97 at Ser-216 plays an important role for correct viral nuclear egress complex (NEC) localization.

It is found in the host nucleus inner membrane. In terms of biological role, plays an essential role in virion nuclear egress, the first step of virion release from infected cell. Within the host nucleus, NEC1 interacts with the newly formed capsid through the vertexes and directs it to the inner nuclear membrane by associating with NEC2. Induces the budding of the capsid at the inner nuclear membrane as well as its envelopment into the perinuclear space. There, the NEC1/NEC2 complex promotes the fusion of the enveloped capsid with the outer nuclear membrane and the subsequent release of the viral capsid into the cytoplasm where it will reach the secondary budding sites in the host Golgi or trans-Golgi network. Inhibits host ISGylation and subsequent innate antiviral response by targeting host UBA7 for proteasomal degradation. In Homo sapiens (Human), this protein is Nuclear egress protein 2.